Reading from the N-terminus, the 583-residue chain is Probable phosphoglucomutase, cytoplasmic 1 (583 aa).

Alpha-D-glucose 1,6-bisphosphate-binding residues include arginine 24 and serine 123. Serine 123 serves as the catalytic Phosphoserine intermediate. Mg(2+)-binding residues include serine 123, aspartate 299, aspartate 301, and aspartate 303. Residue serine 123 is modified to Phosphoserine. Residues aspartate 303, arginine 304, threonine 367, glutamate 386, serine 388, and lysine 399 each contribute to the alpha-D-glucose 1,6-bisphosphate site.

This sequence belongs to the phosphohexose mutase family. Monomer. The cofactor is Mg(2+).

The protein localises to the cytoplasm. It catalyses the reaction alpha-D-glucose 1-phosphate = alpha-D-glucose 6-phosphate. It carries out the reaction O-phospho-L-seryl-[protein] + alpha-D-glucose 1-phosphate = alpha-D-glucose 1,6-bisphosphate + L-seryl-[protein]. The catalysed reaction is alpha-D-glucose 1,6-bisphosphate + L-seryl-[protein] = O-phospho-L-seryl-[protein] + alpha-D-glucose 6-phosphate. Its function is as follows. Catalyzes the reversible isomerization of alpha-D-glucose 1-phosphate to alpha-D-glucose 6-phosphate. The mechanism proceeds via the intermediate compound alpha-D-glucose 1,6-bisphosphate. This enzyme participates in both the breakdown and synthesis of glucose. In Arabidopsis thaliana (Mouse-ear cress), this protein is Probable phosphoglucomutase, cytoplasmic 1.